We begin with the raw amino-acid sequence, 291 residues long: 6-deoxy-6-sulfogluconolactonase (291 aa).

E17, N148, and D198 together coordinate a divalent metal cation. D198 acts as the Proton donor/acceptor in catalysis.

It belongs to the SMP-30/CGR1 family. A divalent metal cation serves as cofactor.

The enzyme catalyses 6-deoxy-6-sulfo-D-glucono-1,5-lactone + H2O = 6-deoxy-6-sulfo-D-gluconate + H(+). Catalyzes the hydrolysis of 6-deoxy-6-sulfo-D-glucono-1,5-lactone to form 6-deoxy-6-sulfo-D-gluconate. Is involved in a degradation pathway of sulfoquinovose (SQ) that allows P.putida SQ1 to use SQ as the sole carbon and energy source for growth. The chain is 6-deoxy-6-sulfogluconolactonase from Pseudomonas putida (Arthrobacter siderocapsulatus).